Reading from the N-terminus, the 525-residue chain is MTENIHKHRILILDFGSQYTQLVARRVRELGVYCELWAWDVTEAQIRDFNPSGIILSGGPESTTEENSPRAPQYVFEAGVPVFGVCYGMQTMAMQLGGHVEASNEREFGYAQVEVVNDSALVRGIEDALTADGKPLLDVWMSHGDKVTAIPSDFVTVASTESCPFAIMANEEKRFYGVQFHPEVTHTRQGMRMLERFVRDICQCEALWTPAKIIDDAVARIREQVGDDKVILGLSGGVDSSVTAMLLHRAIGKNLTCVFVDNGLLRLNEAEQVLDMFGDHFGLNIVHVPAEDRFLSALAGENDPEAKRKIIGRVFVEVFDEEALKLEDVKWLAQGTIYPDVIESAASATGKAHVIKSHHNVGGLPKEMKMGLVEPLKELFKDEVRKIGLELGLPYDMLYRHPFPGPGLGVRVLGEVKKEYCDLLRRADAIFIEELRKADLYDKVSQAFTVFLPVRSVGVMGDGRKYDWVVSLRAVETIDFMTAHWAHLPYDFLGRVSNRIINEVNGISRVVYDISGKPPATIEWE.

The Glutamine amidotransferase type-1 domain occupies 9–207 (RILILDFGSQ…VRDICQCEAL (199 aa)). The active-site Nucleophile is the Cys-86. Residues His-181 and Glu-183 contribute to the active site. In terms of domain architecture, GMPS ATP-PPase spans 208–400 (WTPAKIIDDA…LGLPYDMLYR (193 aa)). An ATP-binding site is contributed by 235–241 (SGGVDSS).

As to quaternary structure, homodimer.

The enzyme catalyses XMP + L-glutamine + ATP + H2O = GMP + L-glutamate + AMP + diphosphate + 2 H(+). It functions in the pathway purine metabolism; GMP biosynthesis; GMP from XMP (L-Gln route): step 1/1. Catalyzes the synthesis of GMP from XMP. This Escherichia coli O8 (strain IAI1) protein is GMP synthase [glutamine-hydrolyzing].